Reading from the N-terminus, the 412-residue chain is Tyrosine--tRNA ligase (412 aa).

Residue Tyr41 participates in L-tyrosine binding. Residues 46 to 55 (ATADSLHVGH) carry the 'HIGH' region motif. L-tyrosine is bound by residues Tyr174 and Gln178. A 'KMSKS' region motif is present at residues 234–238 (KMGKS). Lys237 contacts ATP. An S4 RNA-binding domain is found at 348–411 (LSLTDLLLEH…KKQHLHLRLE (64 aa)).

It belongs to the class-I aminoacyl-tRNA synthetase family. TyrS type 1 subfamily. In terms of assembly, homodimer.

The protein resides in the cytoplasm. It catalyses the reaction tRNA(Tyr) + L-tyrosine + ATP = L-tyrosyl-tRNA(Tyr) + AMP + diphosphate + H(+). Functionally, catalyzes the attachment of tyrosine to tRNA(Tyr) in a two-step reaction: tyrosine is first activated by ATP to form Tyr-AMP and then transferred to the acceptor end of tRNA(Tyr). This is Tyrosine--tRNA ligase from Pseudomonas aeruginosa (strain LESB58).